A 319-amino-acid chain; its full sequence is ATP-dependent 6-phosphofructokinase (319 aa).

ATP-binding positions include Gly-11, 72–73 (RS), and 102–105 (GDGS). A Mg(2+)-binding site is contributed by Asp-103. 126 to 128 (TID) serves as a coordination point for substrate. The active-site Proton acceptor is the Asp-128. Arg-155 serves as a coordination point for ADP. Substrate contacts are provided by residues Arg-163 and 170-172 (MGR). 186–188 (GAE) contributes to the ADP binding site. Residues Glu-223, Arg-245, and 251 to 254 (HTQR) each bind substrate.

Belongs to the phosphofructokinase type A (PFKA) family. ATP-dependent PFK group I subfamily. Prokaryotic clade 'B1' sub-subfamily. In terms of assembly, homotetramer. The cofactor is Mg(2+).

It localises to the cytoplasm. It carries out the reaction beta-D-fructose 6-phosphate + ATP = beta-D-fructose 1,6-bisphosphate + ADP + H(+). Its pathway is carbohydrate degradation; glycolysis; D-glyceraldehyde 3-phosphate and glycerone phosphate from D-glucose: step 3/4. Its activity is regulated as follows. Allosterically activated by ADP and other diphosphonucleosides, and allosterically inhibited by phosphoenolpyruvate. In terms of biological role, catalyzes the phosphorylation of D-fructose 6-phosphate to fructose 1,6-bisphosphate by ATP, the first committing step of glycolysis. This chain is ATP-dependent 6-phosphofructokinase, found in Sulfurimonas denitrificans (strain ATCC 33889 / DSM 1251) (Thiomicrospira denitrificans (strain ATCC 33889 / DSM 1251)).